Here is an 88-residue protein sequence, read N- to C-terminus: Large ribosomal subunit protein bL27 (88 aa).

The disordered stretch occupies residues 1 to 24 (MATKKSGGSSGNGRDSRGRRLGVK).

Belongs to the bacterial ribosomal protein bL27 family.

This chain is Large ribosomal subunit protein bL27, found in Ehrlichia canis (strain Jake).